Here is a 456-residue protein sequence, read N- to C-terminus: Bifunctional protein GlmU (456 aa).

Positions 1–229 are pyrophosphorylase; the sequence is MLNNTMSVVI…ISETDGVNNR (229 aa). Residues 11–14, lysine 25, glutamine 76, 81–82, 103–105, glycine 140, glutamate 154, asparagine 169, and asparagine 227 contribute to the UDP-N-acetyl-alpha-D-glucosamine site; these read LAAG, GT, and YGD. Aspartate 105 is a Mg(2+) binding site. Asparagine 227 is a binding site for Mg(2+). The linker stretch occupies residues 230 to 250; it reads LQLSRLERIYQAEQAEKLLLA. Positions 251-456 are N-acetyltransferase; it reads GVMLRDPARF…QGWQRPVKKK (206 aa). Arginine 333 and lysine 351 together coordinate UDP-N-acetyl-alpha-D-glucosamine. Residue histidine 363 is the Proton acceptor of the active site. Residues tyrosine 366 and asparagine 377 each contribute to the UDP-N-acetyl-alpha-D-glucosamine site. Residues alanine 380, 386-387, serine 405, alanine 423, and arginine 440 contribute to the acetyl-CoA site; that span reads NY.

It in the N-terminal section; belongs to the N-acetylglucosamine-1-phosphate uridyltransferase family. The protein in the C-terminal section; belongs to the transferase hexapeptide repeat family. As to quaternary structure, homotrimer. Mg(2+) serves as cofactor.

It is found in the cytoplasm. It carries out the reaction alpha-D-glucosamine 1-phosphate + acetyl-CoA = N-acetyl-alpha-D-glucosamine 1-phosphate + CoA + H(+). It catalyses the reaction N-acetyl-alpha-D-glucosamine 1-phosphate + UTP + H(+) = UDP-N-acetyl-alpha-D-glucosamine + diphosphate. Its pathway is nucleotide-sugar biosynthesis; UDP-N-acetyl-alpha-D-glucosamine biosynthesis; N-acetyl-alpha-D-glucosamine 1-phosphate from alpha-D-glucosamine 6-phosphate (route II): step 2/2. The protein operates within nucleotide-sugar biosynthesis; UDP-N-acetyl-alpha-D-glucosamine biosynthesis; UDP-N-acetyl-alpha-D-glucosamine from N-acetyl-alpha-D-glucosamine 1-phosphate: step 1/1. It functions in the pathway bacterial outer membrane biogenesis; LPS lipid A biosynthesis. Functionally, catalyzes the last two sequential reactions in the de novo biosynthetic pathway for UDP-N-acetylglucosamine (UDP-GlcNAc). The C-terminal domain catalyzes the transfer of acetyl group from acetyl coenzyme A to glucosamine-1-phosphate (GlcN-1-P) to produce N-acetylglucosamine-1-phosphate (GlcNAc-1-P), which is converted into UDP-GlcNAc by the transfer of uridine 5-monophosphate (from uridine 5-triphosphate), a reaction catalyzed by the N-terminal domain. The polypeptide is Bifunctional protein GlmU (Enterobacter sp. (strain 638)).